A 355-amino-acid chain; its full sequence is Phenylalanine--tRNA ligase alpha subunit (355 aa).

Mg(2+) is bound at residue Glu273.

It belongs to the class-II aminoacyl-tRNA synthetase family. Phe-tRNA synthetase alpha subunit type 1 subfamily. Tetramer of two alpha and two beta subunits. Mg(2+) serves as cofactor.

It is found in the cytoplasm. It carries out the reaction tRNA(Phe) + L-phenylalanine + ATP = L-phenylalanyl-tRNA(Phe) + AMP + diphosphate + H(+). The polypeptide is Phenylalanine--tRNA ligase alpha subunit (Bifidobacterium adolescentis (strain ATCC 15703 / DSM 20083 / NCTC 11814 / E194a)).